A 679-amino-acid chain; its full sequence is Stress-70 protein, mitochondrial (679 aa).

The transit peptide at 1–46 (MISATRAAAARLVGTAASRTPAAARHQDGWNGLSHEAFRFVSRRDY) directs the protein to the mitochondrion. The segment at 1–432 (MISATRAAAA…IQGGVLAGDV (432 aa)) is interaction with NFS1. ADP is bound by residues Thr-63 and Asn-64. Residues 63–431 (TNSCVAVMEG…AIQGGVLAGD (369 aa)) form a nucleotide-binding domain (NBD) region. N6-acetyllysine is present on Lys-76. At Thr-87 the chain carries Phosphothreonine. N6-acetyllysine; alternate occurs at positions 135 and 138. 2 positions are modified to N6-succinyllysine; alternate: Lys-135 and Lys-138. Lys-143 bears the N6-acetyllysine mark. At Lys-206 the chain carries N6-acetyllysine; alternate. An N6-succinyllysine; alternate modification is found at Lys-206. Lys-206 is subject to N6-malonyllysine; alternate. Lys-234 and Lys-288 each carry N6-acetyllysine. Position 300 is an N6-acetyllysine; alternate (Lys-300). N6-succinyllysine; alternate is present on Lys-300. ADP contacts are provided by Glu-313, Lys-316, and Ser-320. Lys-360 is subject to N6-acetyllysine; alternate. Lys-360 is modified (N6-succinyllysine; alternate). Lys-368 carries the post-translational modification N6-succinyllysine. ADP contacts are provided by Gly-388 and Arg-391. Lys-394 carries the N6-succinyllysine modification. Position 408 is a phosphoserine (Ser-408). Residues 432–441 (VTDVLLLDVT) are interdomain linker. Positions 432-679 (VTDVLLLDVT…QKEDQKEEKQ (248 aa)) are interaction with FXN and ISCU. Positions 442–679 (PLSLGIETLG…QKEDQKEEKQ (238 aa)) are substrate-binding domain (SBD). An Omega-N-methylarginine modification is found at Arg-513. N6-acetyllysine; alternate occurs at positions 567 and 600. N6-succinyllysine; alternate is present on residues Lys-567 and Lys-600. At Lys-610 the chain carries N6-succinyllysine. Residue Lys-612 is modified to N6-acetyllysine. Position 646 is an N6-acetyllysine; alternate (Lys-646). Lys-646 is modified (N6-succinyllysine; alternate). The disordered stretch occupies residues 656-679 (ASEREGSGSSGTGEQKEDQKEEKQ). A compositionally biased stretch (basic and acidic residues) spans 669-679 (EQKEDQKEEKQ).

It belongs to the heat shock protein 70 family. In terms of assembly, interacts strongly with the intermediate form of FXN and weakly with its mature form. Interacts with HSCB. Associates with the mitochondrial contact site and cristae organizing system (MICOS) complex, composed of at least MICOS10/MIC10, CHCHD3/MIC19, CHCHD6/MIC25, APOOL/MIC27, IMMT/MIC60, APOO/MIC23/MIC26 and QIL1/MIC13. This complex was also known under the names MINOS or MitOS complex. The MICOS complex associates with mitochondrial outer membrane proteins SAMM50, MTX1, MTX2 and DNAJC11, mitochondrial inner membrane protein TMEM11 and with HSPA9. Interacts with DNLZ, the interaction is required to prevent self-aggregation. Interacts with TESPA1. Interacts with PDPN. Interacts with NFU1, NFS1 and ISCU. Interacts with TP53; the interaction promotes TP53 degradation. Interacts (via SBD domain) with UBXN2A; the interaction with UBXN2A inhibits HSPA9/MOT-2 interaction with and degradation of TP53, thereby promotes TP53 translocation to the nucleus. Interacts with ITPR1 AND VDAC1; this interaction couples ITPR1 to VDAC1. Component of the TIM23 mitochondrial inner membrane pre-sequence translocase complex.

It is found in the mitochondrion. It localises to the nucleus. The protein resides in the nucleolus. The protein localises to the cytoplasm. Its subcellular location is the mitochondrion matrix. The catalysed reaction is ATP + H2O = ADP + phosphate + H(+). With respect to regulation, the chaperone activity is regulated by ATP-induced allosteric coupling of the nucleotide-binding (NBD) and substrate-binding (SBD) domains. ATP binding in the NBD leads to a conformational change in the NBD, which is transferred through the interdomain linker (IDL) to the substrate-binding domain (SBD). This elicits a reduced substrate affinity and a faster substrate exchange rate. Upon hydrolysis of ATP to ADP, the protein undergoes a conformational change that increases its affinity for substrate proteins. It cycles through repeated phases of ATP hydrolysis and nucleotide exchange, facilitating repeated cycles of substrate binding and release. Functions in collaboration with co-chaperones. Functions with the co-chaperone, DNLZ, to maintain solubility and regulate ATP hydrolysis. Nucleotide exchange factors, GRPEL1 and GRPEL2, accelerate nucleotide exchange. In terms of biological role, mitochondrial chaperone that plays a key role in mitochondrial protein import, folding, and assembly. Plays an essential role in the protein quality control system, the correct folding of proteins, the re-folding of misfolded proteins, and the targeting of proteins for subsequent degradation. These processes are achieved through cycles of ATP binding, ATP hydrolysis, and ADP release, mediated by co-chaperones. In mitochondria, it associates with the TIM (translocase of the inner membrane) protein complex to assist in the import and folding of mitochondrial proteins. Plays an important role in mitochondrial iron-sulfur cluster (ISC) biogenesis, interacts with and stabilizes ISC cluster assembly proteins FXN, NFU1, NFS1 and ISCU. Regulates erythropoiesis via stabilization of ISC assembly. Regulates mitochondrial calcium-dependent apoptosis by coupling two calcium channels, ITPR1 and VDAC1, at the mitochondria-associated endoplasmic reticulum (ER) membrane to facilitate calcium transport from the ER lumen to the mitochondria intermembrane space, providing calcium for the downstream calcium channel MCU, which releases it into the mitochondrial matrix. Although primarily located in the mitochondria, it is also found in other cellular compartments. In the cytosol, it associates with proteins involved in signaling, apoptosis, or senescence. It may play a role in cell cycle regulation via its interaction with and promotion of degradation of TP53. May play a role in the control of cell proliferation and cellular aging. Protects against reactive oxygen species (ROS). Extracellular HSPA9 plays a cytoprotective role by preventing cell lysis following immune attack by the membrane attack complex by disrupting formation of the complex. The sequence is that of Stress-70 protein, mitochondrial from Cricetulus griseus (Chinese hamster).